We begin with the raw amino-acid sequence, 192 residues long: UPF0149 protein YgfB (192 aa).

Belongs to the UPF0149 family.

The protein is UPF0149 protein YgfB of Salmonella agona (strain SL483).